A 61-amino-acid chain; its full sequence is UPF0434 protein Pput_3813 (61 aa).

The protein belongs to the UPF0434 family.

This chain is UPF0434 protein Pput_3813, found in Pseudomonas putida (strain ATCC 700007 / DSM 6899 / JCM 31910 / BCRC 17059 / LMG 24140 / F1).